A 362-amino-acid chain; its full sequence is 3-isopropylmalate dehydrogenase (362 aa).

78 to 91 (GPKWEHLAPNDQPE) contributes to the NAD(+) binding site. 4 residues coordinate substrate: Arg99, Arg109, Arg138, and Asp227. Asp227, Asp251, and Asp255 together coordinate Mg(2+). 285–297 (GSAPDIAGKNIAN) is a binding site for NAD(+).

This sequence belongs to the isocitrate and isopropylmalate dehydrogenases family. LeuB type 1 subfamily. As to quaternary structure, homodimer. It depends on Mg(2+) as a cofactor. Mn(2+) serves as cofactor.

It is found in the cytoplasm. The enzyme catalyses (2R,3S)-3-isopropylmalate + NAD(+) = 4-methyl-2-oxopentanoate + CO2 + NADH. The protein operates within amino-acid biosynthesis; L-leucine biosynthesis; L-leucine from 3-methyl-2-oxobutanoate: step 3/4. Functionally, catalyzes the oxidation of 3-carboxy-2-hydroxy-4-methylpentanoate (3-isopropylmalate) to 3-carboxy-4-methyl-2-oxopentanoate. The product decarboxylates to 4-methyl-2 oxopentanoate. The polypeptide is 3-isopropylmalate dehydrogenase (Photobacterium profundum (strain SS9)).